A 258-amino-acid chain; its full sequence is Methylthioribulose-1-phosphate dehydratase (258 aa).

Polar residues predominate over residues Met1 to Asp20. A disordered region spans residues Met1 to Asn21. Position 105 (Cys105) interacts with substrate. Zn(2+) contacts are provided by His123 and His125. Residue Glu153 is the Proton donor/acceptor of the active site. Residue His210 participates in Zn(2+) binding.

It belongs to the aldolase class II family. MtnB subfamily. Zn(2+) is required as a cofactor.

It is found in the cytoplasm. It catalyses the reaction 5-(methylsulfanyl)-D-ribulose 1-phosphate = 5-methylsulfanyl-2,3-dioxopentyl phosphate + H2O. It functions in the pathway amino-acid biosynthesis; L-methionine biosynthesis via salvage pathway; L-methionine from S-methyl-5-thio-alpha-D-ribose 1-phosphate: step 2/6. Functionally, catalyzes the dehydration of methylthioribulose-1-phosphate (MTRu-1-P) into 2,3-diketo-5-methylthiopentyl-1-phosphate (DK-MTP-1-P). This is Methylthioribulose-1-phosphate dehydratase from Chaetomium globosum (strain ATCC 6205 / CBS 148.51 / DSM 1962 / NBRC 6347 / NRRL 1970) (Soil fungus).